We begin with the raw amino-acid sequence, 1214 residues long: Peregrin (1214 aa).

A C2H2-type zinc finger spans residues tyrosine 21 to histidine 47. Disordered regions lie at residues tyrosine 43–arginine 87 and valine 118–proline 177. Residues leucine 58–glutamine 67 are compositionally biased toward basic residues. Positions arginine 59–tyrosine 222 are interaction with KAT6A and KAT6B. The span at glutamine 74–proline 85 shows a compositional bias: low complexity. Acidic residues predominate over residues valine 119–proline 130. Serine 120 is modified (phosphoserine). Lysine 147 is subject to N6-acetyllysine. Residues serine 148–asparagine 167 show a composition bias toward basic residues. Serine 238 carries the phosphoserine modification. A PHD-type 1 zinc finger spans residues aspartate 273–serine 323. The C2HC pre-PHD-type zinc-finger motif lies at alanine 327 to valine 360. A PHD-type 2 zinc finger spans residues leucine 384–threonine 448. A disordered region spans residues threonine 448–lysine 489. Serine 460 and serine 462 each carry phosphoserine. The segment covering glycine 464–glutamate 474 has biased composition (acidic residues). Positions leucine 501 to arginine 821 are interaction with MEAF6 and ING5. A required for RUNX1 and RUNX2 transcriptional activation region spans residues tyrosine 543 to glutamate 1079. Lysine 580 bears the N6-acetyllysine mark. In terms of domain architecture, Bromo spans methionine 628–alanine 732. The interval leucine 819–serine 1062 is disordered. Residues histidine 825–glycine 838 show a composition bias toward basic and acidic residues. Phosphothreonine is present on threonine 858. Positions threonine 858 to serine 871 are enriched in low complexity. Phosphoserine occurs at positions 860, 917, 922, and 926. Over residues serine 993–serine 1021 the composition is skewed to low complexity. Serine 1076 carries the post-translational modification Phosphoserine. A PWWP domain is found at alanine 1085–asparagine 1168. At serine 1187 the chain carries Phosphoserine.

In terms of assembly, component of some HBO1 complex composed of KAT7/HBO1, MEAF6, ING5, and BRPF1. Component of the MOZ/MORF complex composed at least of ING5, KAT6A, KAT6B, MEAF6 and one of BRPF1, BRD1/BRPF2 and BRPF3. Interacts (via PHD-type zinc finger domains) with unmethylated histone H3 at 'Lys-4' (H3K4me0). Interacts with trimethylated 'Lys-36' of histone H3 (H3K36me3). Interacts with ING5; interaction directs BRPF1 to H4K4me3-enriched chromatin at the 5' of active genes. Interacts with KAT7. Acetylated by KAT6A. In terms of tissue distribution, high levels in testis.

Its subcellular location is the nucleus. It is found in the chromosome. It localises to the cytoplasm. Functionally, scaffold subunit of various histone acetyltransferase (HAT) complexes, such as the MOZ/MORF and HBO1 complexes, which have a histone H3 acetyltransferase activity. Plays a key role in HBO1 complex by directing KAT7/HBO1 specificity towards histone H3 'Lys-14' acetylation (H3K14ac). Some HAT complexes preferentially mediate histone H3 'Lys-23' (H3K23ac) acetylation. Positively regulates the transcription of RUNX1 and RUNX2. The protein is Peregrin of Homo sapiens (Human).